The sequence spans 501 residues: ATP synthase subunit alpha (501 aa).

169–176 (GDRQTGKT) is a binding site for ATP.

The protein belongs to the ATPase alpha/beta chains family. In terms of assembly, F-type ATPases have 2 components, CF(1) - the catalytic core - and CF(0) - the membrane proton channel. CF(1) has five subunits: alpha(3), beta(3), gamma(1), delta(1), epsilon(1). CF(0) has three main subunits: a(1), b(2) and c(9-12). The alpha and beta chains form an alternating ring which encloses part of the gamma chain. CF(1) is attached to CF(0) by a central stalk formed by the gamma and epsilon chains, while a peripheral stalk is formed by the delta and b chains.

The protein resides in the cell inner membrane. The catalysed reaction is ATP + H2O + 4 H(+)(in) = ADP + phosphate + 5 H(+)(out). Produces ATP from ADP in the presence of a proton gradient across the membrane. The alpha chain is a regulatory subunit. This chain is ATP synthase subunit alpha, found in Campylobacter jejuni subsp. doylei (strain ATCC BAA-1458 / RM4099 / 269.97).